Reading from the N-terminus, the 447-residue chain is Voltage-gated purine nucleotide uniporter SLC17A9 (447 aa).

The disordered stretch occupies residues 1–26 (MPSQRSSLMQPIPEETRKTPSAAAED). Transmembrane regions (helical) follow at residues 40–60 (ILLL…VCTV), 74–94 (GIVL…GGHL), 103–123 (VILL…LLAH), 129–149 (LAFL…YFPA), 169–189 (TVGA…SVLL), 192–212 (CGWQ…AYYV), 252–272 (VWAA…LLSW), 287–307 (WVFN…SGFI), 327–347 (VMGL…TSFL), 380–400 (GFLF…GVCL), and 413–433 (CVFH…LVFG).

This sequence belongs to the major facilitator superfamily. Sodium/anion cotransporter family. In brain, specifically expressed in the medulla and is associated with chromaffin granules (at protein level). Predominantly expressed in adrenal gland, brain and thyroid.

Its subcellular location is the cytoplasmic vesicle. The protein localises to the secretory vesicle. The protein resides in the chromaffin granule membrane. It is found in the secretory vesicle membrane. It localises to the lysosome membrane. It carries out the reaction ATP(in) = ATP(out). It catalyses the reaction ADP(in) = ADP(out). The catalysed reaction is GTP(in) = GTP(out). Activity is chloride-dependent. Functionally, voltage-gated ATP nucleotide uniporter that can also transport the purine nucleotides ADP and GTP. Uses the membrane potential as the driving force to control ATP accumulation in lysosomes and secretory vesicles. By controlling ATP storage in lysosomes, regulates ATP-dependent proteins of these organelles. Also indirectly regulates the exocytosis of ATP through its import into lysosomes in astrocytes and secretory vesicles such as adrenal chromaffin granules, mucin granules and synaptic vesicles. This Mus musculus (Mouse) protein is Voltage-gated purine nucleotide uniporter SLC17A9.